The sequence spans 359 residues: Stearoyl-CoA desaturase (359 aa).

Residues 1 to 72 (MPAHLLQEEI…EGPRPKLEYV (72 aa)) are Cytoplasmic-facing. A helical membrane pass occupies residues 73–93 (WRNIILMSLLHLGALYGIILI). N75 contacts substrate. The Lumenal portion of the chain corresponds to 94 to 97 (PTCK). The helical transmembrane segment at 98 to 118 (IYTLLWAFAYYLLSAVGVTAG) threads the bilayer. Topologically, residues 119–217 (AHRLWSHRTY…EKLVMFQRRY (99 aa)) are cytoplasmic. 2 residues coordinate Fe cation: H120 and H125. A Histidine box-1 motif is present at residues 120–125 (HRLWSH). Residues N148, R155, and D156 each contribute to the substrate site. Fe cation contacts are provided by H157, H160, and H161. Residues 157–161 (HRAHH) carry the Histidine box-2 motif. R188 and K189 together coordinate substrate. S203 carries the phosphoserine modification. Residues 218–237 (YKPGILLMCFILPTIVPWYC) traverse the membrane as a helical segment. The Lumenal portion of the chain corresponds to 238–241 (WGEA). The helical transmembrane segment at 242–263 (FPQSLFVATFLRYAIVLNATWL) threads the bilayer. Residue W262 coordinates substrate. Over 264 to 359 (VNSAAHLYGY…RTGDESYKSG (96 aa)) the chain is Cytoplasmic. Residues H269, H298, H301, and H302 each contribute to the Fe cation site. A Histidine box-3 motif is present at residues 298–302 (HNYHH).

It belongs to the fatty acid desaturase type 1 family. Requires Fe(2+) as cofactor.

Its subcellular location is the endoplasmic reticulum membrane. It catalyses the reaction octadecanoyl-CoA + 2 Fe(II)-[cytochrome b5] + O2 + 2 H(+) = (9Z)-octadecenoyl-CoA + 2 Fe(III)-[cytochrome b5] + 2 H2O. The enzyme catalyses hexadecanoyl-CoA + 2 Fe(II)-[cytochrome b5] + O2 + 2 H(+) = (9Z)-hexadecenoyl-CoA + 2 Fe(III)-[cytochrome b5] + 2 H2O. Its function is as follows. Stearoyl-CoA desaturase that utilizes O(2) and electrons from reduced cytochrome b5 to introduce the first double bond into saturated fatty acyl-CoA substrates. Catalyzes the insertion of a cis double bond at the delta-9 position into fatty acyl-CoA substrates including palmitoyl-CoA and stearoyl-CoA. Gives rise to a mixture of 16:1 and 18:1 unsaturated fatty acids. Plays an important role in lipid biosynthesis. Plays an important role in regulating the expression of genes that are involved in lipogenesis and in regulating mitochondrial fatty acid oxidation. Plays an important role in body energy homeostasis. Contributes to the biosynthesis of membrane phospholipids, cholesterol esters and triglycerides. The sequence is that of Stearoyl-CoA desaturase (SCD) from Sus scrofa (Pig).